The chain runs to 119 residues: Large ribosomal subunit protein uL18 (119 aa).

Belongs to the universal ribosomal protein uL18 family. Part of the 50S ribosomal subunit; part of the 5S rRNA/L5/L18/L25 subcomplex. Contacts the 5S and 23S rRNAs.

Its function is as follows. This is one of the proteins that bind and probably mediate the attachment of the 5S RNA into the large ribosomal subunit, where it forms part of the central protuberance. This Chelativorans sp. (strain BNC1) protein is Large ribosomal subunit protein uL18.